Reading from the N-terminus, the 444-residue chain is Tubulin beta chain (444 aa).

The MREI motif motif lies at 1-4 (MREI). Residue Q11 coordinates GTP. Phosphoserine is present on S40. The residue at position 55 (T55) is a Phosphothreonine. K58 carries the N6-acetyllysine; alternate modification. K58 carries the post-translational modification N6-succinyllysine; alternate. Residue K58 forms a Glycyl lysine isopeptide (Lys-Gly) (interchain with G-Cter in ubiquitin); alternate linkage. GTP is bound by residues E69, S138, G142, T143, and G144. E69 serves as a coordination point for Mg(2+). A Phosphoserine; by CDK1 modification is found at S172. N204 and N226 together coordinate GTP. A phosphothreonine mark is found at T285 and T290. R318 carries the post-translational modification Omega-N-methylarginine. Residue K324 forms a Glycyl lysine isopeptide (Lys-Gly) (interchain with G-Cter in ubiquitin) linkage. A disordered region spans residues 423 to 444 (QQYQDATAEEEEDFGEEAEEEA). Over residues 429–444 (TAEEEEDFGEEAEEEA) the composition is skewed to acidic residues. E434, E438, E439, and E441 each carry 5-glutamyl polyglutamate. 5 positions are modified to 5-glutamyl glycine: E438, E439, E441, E442, and E443.

Belongs to the tubulin family. Heterodimer of alpha and beta chains. A typical microtubule is a hollow water-filled tube with an outer diameter of 25 nm and an inner diameter of 15 nM. Alpha-beta heterodimers associate head-to-tail to form protofilaments running lengthwise along the microtubule wall with the beta-tubulin subunit facing the microtubule plus end conferring a structural polarity. Microtubules usually have 13 protofilaments but different protofilament numbers can be found in some organisms and specialized cells. Interacts with CIMAP3. Interacts with DIAPH1. Interacts with MX1. May interact with RNABP10. Interacts with CFAP157. Nascent tubulin polypeptide interacts (via beta-tubulin MREI motif) with TTC5/STRAP; this interaction results in tubulin mRNA-targeted degradation. The cofactor is Mg(2+). Post-translationally, some glutamate residues at the C-terminus are polyglycylated, resulting in polyglycine chains on the gamma-carboxyl group. Glycylation is mainly limited to tubulin incorporated into axonemes (cilia and flagella) whereas glutamylation is prevalent in neuronal cells, centrioles, axonemes, and the mitotic spindle. Both modifications can coexist on the same protein on adjacent residues, and lowering polyglycylation levels increases polyglutamylation, and reciprocally. Cilia and flagella glycylation is required for their stability and maintenance. Flagella glycylation controls sperm motility. Some glutamate residues at the C-terminus are polyglutamylated, resulting in polyglutamate chains on the gamma-carboxyl group. Polyglutamylation plays a key role in microtubule severing by spastin (SPAST). SPAST preferentially recognizes and acts on microtubules decorated with short polyglutamate tails: severing activity by SPAST increases as the number of glutamates per tubulin rises from one to eight, but decreases beyond this glutamylation threshold. Glutamylation is also involved in cilia motility. In terms of processing, phosphorylated on Ser-172 by CDK1 during the cell cycle, from metaphase to telophase, but not in interphase. This phosphorylation inhibits tubulin incorporation into microtubules.

The protein resides in the cytoplasm. Its subcellular location is the cytoskeleton. In terms of biological role, tubulin is the major constituent of microtubules, a cylinder consisting of laterally associated linear protofilaments composed of alpha- and beta-tubulin heterodimers. Microtubules grow by the addition of GTP-tubulin dimers to the microtubule end, where a stabilizing cap forms. Below the cap, tubulin dimers are in GDP-bound state, owing to GTPase activity of alpha-tubulin. In Sus scrofa (Pig), this protein is Tubulin beta chain (TUBB).